Here is a 146-residue protein sequence, read N- to C-terminus: MGLTAHEKQLITGSWGKINAKAIGKEALGRLLNTFPWTQRYFSSFGNLGSAEAIFHNEAVAAHGEKVVTSVGEAIKHMDDIKGYYAELSKYHSETLHVDPNNFKRFGGCLSITLGHHFGEEYTPELHAAYEHLFDAIADALGKGYH.

The region spanning 2–146 (GLTAHEKQLI…IADALGKGYH (145 aa)) is the Globin domain. The heme b site is built by H63 and H92.

This sequence belongs to the globin family. In terms of assembly, heterotetramer of two alpha chains and two beta chains. In terms of tissue distribution, red blood cells.

Functionally, involved in oxygen transport from the lung to the various peripheral tissues. In Xenopus borealis (Kenyan clawed frog), this protein is Hemoglobin subunit beta-2 (hbb2).